Reading from the N-terminus, the 213-residue chain is Ras-related protein Rab-25 (213 aa).

GTP is bound by residues S21, G24, K25, T26, N27, S38, H39, T43, and T44. T26 contacts Mg(2+). 2 consecutive short sequence motifs (switch) follow at residues 35–49 and 67–84; these read NEFSHDSRTTIGVEF and DTAGLERYRAITSAYYRG. Mg(2+) is bound by residues T44 and D67. G70, N125, K126, D128, A156, and L157 together coordinate GTP. 2 S-geranylgeranyl cysteine lipidation sites follow: C209 and C210. C210 carries the post-translational modification Cysteine methyl ester. The propeptide at 211-213 is removed in mature form; it reads ISL.

Belongs to the small GTPase superfamily. Rab family. In terms of assembly, interacts (GTP-bound form) with RAB11FIP1, RAB11FIP2, RAB11FIP3 and RAB11FIP4. Interacts (via the hypervariable C-terminal region) with ITGB1 (via the cytoplasmic region); the interaction is GTP-dependent. Interacts with ITGAV. Associates with the integrin alpha-V/beta-1 heterodimer. Interacts with VPS33B. Requires Mg(2+) as cofactor.

It is found in the cell membrane. The protein localises to the cell projection. Its subcellular location is the pseudopodium membrane. The protein resides in the cytoplasmic vesicle. It carries out the reaction GTP + H2O = GDP + phosphate + H(+). Regulated by guanine nucleotide exchange factors (GEFs) which promote the exchange of bound GDP for free GTP. Regulated by GTPase activating proteins (GAPs) which increase the GTP hydrolysis activity. Inhibited by GDP dissociation inhibitors (GDIs) which prevent Rab-GDP dissociation. Its function is as follows. The small GTPases Rab are key regulators of intracellular membrane trafficking, from the formation of transport vesicles to their fusion with membranes. Rabs cycle between an inactive GDP-bound form and an active GTP-bound form that is able to recruit to membranes different set of downstream effectors directly responsible for vesicle formation, movement, tethering and fusion. RAB25 regulates epithelial cell differentiation, proliferation and survival, thereby playing key roles in tumorigenesis. Promotes invasive migration of cells in which it functions to localize and maintain integrin alpha-V/beta-1 at the tips of extending pseudopodia. Involved in the regulation of epithelial morphogenesis through the control of CLDN4 expression and localization at tight junctions. May selectively regulate the apical recycling pathway. Together with MYO5B regulates transcytosis. In Mus musculus (Mouse), this protein is Ras-related protein Rab-25.